The following is a 105-amino-acid chain: UPF0145 protein lpl0253 (105 aa).

Belongs to the UPF0145 family.

In Legionella pneumophila (strain Lens), this protein is UPF0145 protein lpl0253.